The primary structure comprises 448 residues: Beclin-1 (448 aa).

An N-acetylmethionine modification is found at M1. Phosphoserine occurs at positions 14 and 29. The tract at residues 47–66 is disordered; that stretch reads TTAQAKPGETQEEEANSGEE. A phosphoserine; by AMPK mark is found at S88, S91, and S94. The BH3 motif lies at 106–125; sequence TMENLSRRLKVTGDLFDIMS. The interaction with BCL2 and BCL2L1 isoform Bcl-X(L) stretch occupies residues 110-157; sequence LSRRLKVTGDLFDIMSGQTDVDHPLCEECTDTLLDQLDTQLNVTENEC. T117 carries the phosphothreonine; by DAPK1 modification. A coiled-coil region spans residues 140–268; that stretch reads DTLLDQLDTQ…LDKLKKTNVF (129 aa). Residues 243–448 form an evolutionary conserved domain (ECD) region; sequence DELKSVENQV…AWVSSQFYNK (206 aa). Glycyl lysine isopeptide (Lys-Gly) (interchain with G-Cter in ubiquitin) cross-links involve residues K400 and K435. Positions 423–448 are required for membrane-association; sequence WTKALKFMLTNLKWGLAWVSSQFYNK.

The protein belongs to the beclin family. As to quaternary structure, a homodimeric form is proposed to exist; this metastable form readily transits to ATG14- or UVRAG-containing complexes with BECN1:UVRAG being more stable than BECN1:ATG14. Component of the PI3K (PI3KC3/PI3K-III/class III phosphatidylinositol 3-kinase) complex whose core is composed of the catalytic subunit PIK3C3, the regulatory subunit PIK3R4 and BECN1, and associates with additional regulatory/auxiliary subunits to form alternative complex forms. Accepted alternative complex forms containing a fourth regulatory subunit in a mutually exclusive manner are PI3K complex I (PI3KC3-C1) containing ATG14, and PI3K complex II (PI3KC3-C2) containing UVRAG. PI3KC3-C1 displays a V-shaped architecture with PIK3R4 serving as a bridge between PIK3C3 and the ATG14:BECN1 subcomplex. Both, PI3KC3-C1 and PI3KC3-C2, can associate with further regulatory subunits, such as RUBCN, SH3GLB1/Bif-1 and AMBRA1. PI3KC3-C1 probably associates with PIK3CB. Forms a complex with PPP2CA and AMBRA1; AMBRA1 and BECN1 components of the complex regulate MYC stability via different pathways. Component of the complex, at least composed of LRPPRC, BECN1 and BCL2; the interactions prevent BECN1 from forming an autophagy-inducing complex with PIK3C3. Interacts with AMBRA1, GOPC, GRID2 and PIK3CB. Interacts with BCL2 and BCL2L1 isoform Bcl-X(L); the interaction inhibits BECN1 function in promoting autophagy by interfering with the formation of the PI3K complex. Interacts with cytosolic HMGB1; inhibits the interaction of BECN1 and BCL2 leading to promotion of autophagy. Interacts with USP10, USP13, VMP1, DAPK1. Interacts with the poly-Gln domain of ATXN3; the interaction causes deubiquitination at Lys-400 and stabilizes BECN1. Interacts with SLAMF1. Interacts with TRIM5; the interaction causes activation of BECN1 by causing its dissociation from its inhibitors BCL2 and TAB2. Interacts with active ULK1 (phosphorylated on 'Ser-317') and MEFV simultaneously. Interacts with TRIM50. Interacts with TRIM16. Interacts with WDR81 and WDR91; negatively regulates the PI3 kinase/PI3K activity associated with endosomal membranes. Interacts with LAPTM4B; competes with EGFR for LAPTM4B binding; regulates EGFR activity. Interacts with ATG14; this interaction is increased in the absence of TMEM39A. Interacts with WASHC1; preventing interaction with AMBRA1 and the DCX(AMBRA1) complex and subsequent ubiquitination. Interacts with TRIM17. Interacts with BCL2L10/BCL-B (via BH1 domain). Interacts with SH3BGRL. Interacts with Irgm1; enhancing BECN1-interacting partners and influencing the composition of the BECN1 complex. Interacts with ARMC3. Interacts with LRPPRC. (Microbial infection) Interacts with murine gammaherpesvirus 68 M11; the viral protein binds BECN1 with higher affinity than cellular BCL2. Post-translationally, phosphorylation at Thr-117 by DAPK1 reduces its interaction with BCL2 and BCL2L1 and promotes induction of autophagy. In response to autophagic stimuli, phosphorylated at serine residues by AMPK in an ATG14-dependent manner, and this phosphorylation is critical for maximally efficient autophagy. In terms of processing, polyubiquitinated by NEDD4, both with 'Lys-11'- and 'Lys-63'-linkages. 'Lys-11'-linked polyubiquitination leads to degradation and is enhanced when the stabilizing interaction partner VPS34 is depleted. Deubiquitinated by USP10 and USP13, leading to stabilize the PIK3C3/VPS34-containing complexes. Polyubiquitinated at Lys-400 with 'Lys-48'-linkages. 'Lys-48'-linked poyubiquitination of Lys-400 leads to degradation. Deubiquitinated by ATXN3, leading to stabilization. Ubiquitinated at Lys-435 via 'Lys-63'-linkage by the DCX(AMBRA1) complex, thereby increasing the association between BECN1 and PIK3C3 to promote PIK3C3 activity. 'Lys-48'-linked ubiquitination by RNF216 leads to proteasomal degradation and autophagy inhibition. Proteolytically processed by caspases including CASP8 and CASP3; the C-terminal fragments lack autophagy-inducing capacity and are proposed to induce apoptosis. Thus the cleavage is proposed to be an determinant to switch from autophagy to apoptosis pathways affecting cellular homeostasis including viral infections and survival of tumor cells.

The protein localises to the cytoplasm. It is found in the golgi apparatus. The protein resides in the trans-Golgi network membrane. It localises to the endosome membrane. Its subcellular location is the endoplasmic reticulum membrane. The protein localises to the mitochondrion membrane. It is found in the endosome. The protein resides in the cytoplasmic vesicle. It localises to the autophagosome. Its subcellular location is the mitochondrion. The protein localises to the nucleus. Functionally, plays a central role in autophagy. Acts as a core subunit of different PI3K complex forms that mediate formation of phosphatidylinositol 3-phosphate and are believed to play a role in multiple membrane trafficking pathways: PI3KC3-C1 is involved in initiation of autophagosomes and PI3KC3-C2 in maturation of autophagosomes and endocytosis. Involved in regulation of degradative endocytic trafficking and required for the abscission step in cytokinesis, probably in the context of PI3KC3-C2. Essential for the formation of PI3KC3-C2 but not PI3KC3-C1 PI3K complex forms. Involved in endocytosis including endosome formation in neuronal cells. May play a role in antiviral host defense. Its function is as follows. Beclin-1-C 35 kDa localized to mitochondria can promote apoptosis; it induces the mitochondrial translocation of BAX and the release of proapoptotic factors. The sequence is that of Beclin-1 (Becn1) from Mus musculus (Mouse).